Reading from the N-terminus, the 310-residue chain is Methionyl-tRNA formyltransferase (310 aa).

109–112 provides a ligand contact to (6S)-5,6,7,8-tetrahydrofolate; sequence SLLP.

It belongs to the Fmt family.

The enzyme catalyses L-methionyl-tRNA(fMet) + (6R)-10-formyltetrahydrofolate = N-formyl-L-methionyl-tRNA(fMet) + (6S)-5,6,7,8-tetrahydrofolate + H(+). Its function is as follows. Attaches a formyl group to the free amino group of methionyl-tRNA(fMet). The formyl group appears to play a dual role in the initiator identity of N-formylmethionyl-tRNA by promoting its recognition by IF2 and preventing the misappropriation of this tRNA by the elongation apparatus. This Staphylococcus epidermidis (strain ATCC 35984 / DSM 28319 / BCRC 17069 / CCUG 31568 / BM 3577 / RP62A) protein is Methionyl-tRNA formyltransferase.